Reading from the N-terminus, the 218-residue chain is Guanylate kinase (218 aa).

The 180-residue stretch at 15 to 194 (GMMLVLSSPS…SIADVRAILR (180 aa)) folds into the Guanylate kinase-like domain. Residue 22 to 29 (SPSGAGKT) coordinates ATP.

The protein belongs to the guanylate kinase family.

It is found in the cytoplasm. It catalyses the reaction GMP + ATP = GDP + ADP. Its function is as follows. Essential for recycling GMP and indirectly, cGMP. In Rhodospirillum rubrum (strain ATCC 11170 / ATH 1.1.1 / DSM 467 / LMG 4362 / NCIMB 8255 / S1), this protein is Guanylate kinase.